Here is a 214-residue protein sequence, read N- to C-terminus: Small ribosomal subunit protein uS5 (214 aa).

Positions 54–117 constitute an S5 DRBM domain; sequence LRYDIVDIGI…RDAKMRIIPV (64 aa).

The protein belongs to the universal ribosomal protein uS5 family. As to quaternary structure, part of the 30S ribosomal subunit. Contacts protein S4.

With S4 and S12 plays an important role in translational accuracy. This chain is Small ribosomal subunit protein uS5, found in Sulfolobus acidocaldarius (strain ATCC 33909 / DSM 639 / JCM 8929 / NBRC 15157 / NCIMB 11770).